The sequence spans 65 residues: Large ribosomal subunit protein bL35 (65 aa).

It belongs to the bacterial ribosomal protein bL35 family.

The sequence is that of Large ribosomal subunit protein bL35 from Aliarcobacter butzleri (strain RM4018) (Arcobacter butzleri).